A 517-amino-acid polypeptide reads, in one-letter code: MDIIGGQHLRQMWDDLADVYGHKTALICESSSGVVNRYSYLELNQEINRTANLFYTLGIRKGDKVALHLDNCPEFIFCWFGLAKIGAIMVPINARLLREESAWILQNSQACLLVTSAQFYPMYQQIQQEDASQLRHICLIDMALPADDGVSSFTQLKNQQPATLCYAPPLSTDDTAEILFTSGTTSRPKGVVITHYNLRFAGYYSAWQCALRDDDVYLTVMPAFHIDCQCTAAMAAFSAGATFVLVEKYSARAFWGQVQKYRATITECIPMMIRTLMVQPPSANDRQHCLREVMFYLNLSEQEKDAFCERFSVRLLTSYGMTETIVGIIGDRPGDKRRWPSIGRAGFCYEAEIRDDHNRPLPAGELGEICIKGVPGKTIFKEYFLNPKATAKVLEADGWLHTGDTGYRDEEGFFYFVDRRCNMIKRGGENVSCVELENIIAAHPKIQDIVVVGIKDSIRDEAIKAFVVLNEGETLSEEEFFRFCEQNMAKFKVPSYLEIRKDLPRNCSGKIIRKNLK.

The protein belongs to the ATP-dependent AMP-binding enzyme family.

The catalysed reaction is 4-(trimethylamino)butanoate + ATP + CoA = 4-(trimethylamino)butanoyl-CoA + AMP + diphosphate. It carries out the reaction crotonobetaine + ATP + CoA = crotonobetainyl-CoA + AMP + diphosphate. The enzyme catalyses (R)-carnitine + ATP + CoA = (R)-carnitinyl-CoA + AMP + diphosphate. It functions in the pathway amine and polyamine metabolism; carnitine metabolism. Catalyzes the transfer of CoA to carnitine, generating the initial carnitinyl-CoA needed for the CaiB reaction cycle. Also has activity toward crotonobetaine and gamma-butyrobetaine. This Escherichia coli O17:K52:H18 (strain UMN026 / ExPEC) protein is Crotonobetaine/carnitine--CoA ligase.